The primary structure comprises 254 residues: 2-dehydro-3-deoxy-D-gluconate 5-dehydrogenase (254 aa).

Tyr159 (proton acceptor) is an active-site residue.

Belongs to the short-chain dehydrogenases/reductases (SDR) family.

The enzyme catalyses 2-dehydro-3-deoxy-D-gluconate + NAD(+) = 3-deoxy-D-glycero-2,5-hexodiulosonate + NADH + H(+). Its function is as follows. Involved in the degradation of 3,6-anhydro-L-galactose, which is the major monomeric sugar of red macroalgae. Catalyzes the fourth step of the pathway, the reduction of 3-deoxy-D-glycero-2,5-hexodiulosonate (L-DDGal) to 2-dehydro-3-deoxy-D-gluconate (KDG). This Pseudoalteromonas atlantica (strain T6c / ATCC BAA-1087) protein is 2-dehydro-3-deoxy-D-gluconate 5-dehydrogenase.